A 540-amino-acid polypeptide reads, in one-letter code: Cytosolic carboxypeptidase 6 (540 aa).

The Peptidase M14 domain maps to 167 to 438 (YPYTYTRFQH…NVARTFLDYY (272 aa)). The Zn(2+) site is built by His-230, Glu-233, and His-328. Glu-401 serves as the catalytic Proton donor/acceptor.

The protein belongs to the peptidase M14 family. As to quaternary structure, interacts with MYLK. The cofactor is Zn(2+). Widely expressed. Expressed abundantly in testis, pituitary and brain and to a lower extent in eye, stomach, adrenal and kidney. In brain, expressed at low level in cerebellum as compared to cortex.

It localises to the cytoplasm. The protein localises to the cytosol. It is found in the cytoskeleton. The protein resides in the microtubule organizing center. Its subcellular location is the centrosome. It localises to the centriole. The protein localises to the golgi apparatus. It is found in the cilium basal body. It carries out the reaction (L-glutamyl)(n+1)-gamma-L-glutamyl-L-glutamyl-[protein] + H2O = (L-glutamyl)(n)-gamma-L-glutamyl-L-glutamyl-[protein] + L-glutamate. The enzyme catalyses C-terminal L-alpha-aminoacyl-L-glutamyl-L-glutamyl-[tubulin] + H2O = C-terminal L-alpha-aminoacyl-L-glutamyl-[tubulin] + L-glutamate. Metallocarboxypeptidase that mediates protein deglutamylation of tubulin and non-tubulin target proteins. Catalyzes the removal of polyglutamate side chains present on the gamma-carboxyl group of glutamate residues within the C-terminal tail of tubulin protein. Specifically cleaves tubulin long-side-chains, while it is not able to remove the branching point glutamate. Also catalyzes the removal of polyglutamate residues from the carboxy-terminus of non-tubulin proteins such as MYLK. Mediates the deglutamylation of nucleotidyltransferase CGAS, leading to CGAS antiviral defense response activation. Involved in KLF4 deglutamylation which promotes KLF4 proteasome-mediated degradation, thereby negatively regulating cell pluripotency maintenance and embryogenesis. This chain is Cytosolic carboxypeptidase 6, found in Mus musculus (Mouse).